Consider the following 107-residue polypeptide: Iron-binding protein IscA (107 aa).

Cysteine 35, cysteine 99, and cysteine 101 together coordinate Fe cation.

The protein belongs to the HesB/IscA family. Homodimer; may form tetramers and higher multimers. Fe cation serves as cofactor.

Functionally, is able to transfer iron-sulfur clusters to apo-ferredoxin. Multiple cycles of [2Fe2S] cluster formation and transfer are observed, suggesting that IscA acts catalytically. Recruits intracellular free iron so as to provide iron for the assembly of transient iron-sulfur cluster in IscU in the presence of IscS, L-cysteine and the thioredoxin reductase system TrxA/TrxB. This is Iron-binding protein IscA from Xenorhabdus nematophila (strain ATCC 19061 / DSM 3370 / CCUG 14189 / LMG 1036 / NCIMB 9965 / AN6).